The following is a 153-amino-acid chain: uncharacterized protein (153 aa).

This is an uncharacterized protein from Saccharomyces cerevisiae (strain ATCC 204508 / S288c) (Baker's yeast).